We begin with the raw amino-acid sequence, 886 residues long: MTSQLIKKIVTGDEIRNAFLKFYSEKLHKIIPSASLIPDDPTVMLTIAGMLPFKPVFLGLKERPSKRATSSQKCIRTNDIENVGVTARHHTFFEMLGNFSFGDYFKREAIQWAWELVTNIYQLSVENIIVSVFHEDEESAKIWIDEIGIHPDRIVKLGEEDNFWSSGKTGPCGPCSELYYDFHPEKGLQNIDLEDGDRFIEFYNLVFMQYNRDQNGKLTDLKFKNIDTGMGLERMAQILQKKQNNYETDLIFPIIQKICEIANIDYFSSDDKNKISLKIIGDHTRAVIHLISDGVAASNLGRGYILRRLIRRMVRHGRLLGITNEFLPHIASVGINLMQNNYPDLKNNNDLILNEIKIEEIRFRETLERGEKLLDELISSGQKLISGFKAFELYDTYGFPLELTVEIAEENSISVDVKGFEEEMNAQKERAKAASSNIDLTLEGSLEREIDLFNKTVFNGYNSLLSEAEIKGIFLDSTLVKQASEGQKVLIVLDQTTFYGESGGQVGDIGTIFSKDVEVLVDNVMRKKNVFLHHGTIKKGILTIGQKVKTNVSSSNRAKAAANHTATHLLQSALKLIVNESVGQKGSLVAFNKLRFDFNSSNPISKDQISKIETLVNSWIMENHALEIKNMSKSEALEKGAVAMFGEKYDDEVRVVNVPGVSMELCGGTHVKTTSELGSFKIISEEGISAGVRRIEALSGQSALDYFSDRNALVNQLSDLLKANPNQLFERVNNLQSELINKNKEIQKMKDEIAYFKYSSIKSSAEIVNSFSILVNQIDGLDGNSLQSAALNLTSHLGNKAIVILGGIPNPENRKLLFVVSLGDDAVKIGLHAGKLINEIARICSGGGGGKPNFAQAGAKDIDKLSDAIDYAKNYLQKTLDSHSDK.

Zn(2+)-binding residues include H564, H568, C666, and H670.

It belongs to the class-II aminoacyl-tRNA synthetase family. The cofactor is Zn(2+).

It is found in the cytoplasm. The enzyme catalyses tRNA(Ala) + L-alanine + ATP = L-alanyl-tRNA(Ala) + AMP + diphosphate. In terms of biological role, catalyzes the attachment of alanine to tRNA(Ala) in a two-step reaction: alanine is first activated by ATP to form Ala-AMP and then transferred to the acceptor end of tRNA(Ala). Also edits incorrectly charged Ser-tRNA(Ala) and Gly-tRNA(Ala) via its editing domain. The sequence is that of Alanine--tRNA ligase from Prochlorococcus marinus (strain MIT 9301).